Here is a 104-residue protein sequence, read N- to C-terminus: Protein MGF 300-3L (104 aa).

It belongs to the asfivirus MGF 300 family.

Its function is as follows. Plays a role in virus cell tropism, and may be required for efficient virus replication in macrophages. The sequence is that of Protein MGF 300-3L from African swine fever virus (isolate Tick/Malawi/Lil 20-1/1983) (ASFV).